The following is a 2036-amino-acid chain: Putative mediator of RNA polymerase II transcription subunit 24 (2036 aa).

8 disordered regions span residues 51–70, 159–184, 212–451, 501–580, 754–840, 928–1124, 1375–1419, and 1565–1608; these read NNNN…NNNV, DNIE…NNIG, SPSP…QTTT, KSVN…NNNN, NLKN…SHQK, NNNN…NKDL, NNKN…NNNN, and NSSA…NGDT. Residues 212–229 are compositionally biased toward low complexity; the sequence is SPSPSSSSSSSTSPSSQQ. The span at 260–270 shows a compositional bias: basic and acidic residues; it reads EIMKVKEEPIK. 6 stretches are compositionally biased toward low complexity: residues 273 to 291, 300 to 311, 387 to 451, 501 to 539, 547 to 580, and 754 to 770; these read TTTT…STTT, TNGNGEETTITT, QPQP…QTTT, KSVN…NSNN, NNNN…NNNN, and NLKN…NSNG. Residues 505–584 are a coiled coil; that stretch reads NNNNNNNNNN…NNNNNNINNI (80 aa). Residues 778-787 are compositionally biased toward polar residues; that stretch reads GSSTDGSNKL. Low complexity-rich tracts occupy residues 788–808 and 928–943; these read SSTN…LNGN and NNNN…NNKN. The stretch at 943 to 977 forms a coiled coil; it reads NKNSKKSNNKNKNNKNNNKKNKNNNNNNNNNNNNN. Residues 944 to 964 are compositionally biased toward basic residues; sequence KNSKKSNNKNKNNKNNNKKNK. Composition is skewed to low complexity over residues 965–999, 1017–1118, 1385–1419, 1565–1584, and 1594–1608; these read NNNN…NNNN, SNNS…NNNN, NSSA…LPKS, and SSNT…NGDT. The stretch at 1915-1968 forms a coiled coil; sequence SKNQSLKKKQKLKQKKQQHNNNNGGEYNIDQDHIEQIQQQQQQYQKQQQQRKDE.

It belongs to the Mediator complex subunit 24 family. As to quaternary structure, component of the Mediator complex.

It is found in the nucleus. Functionally, component of the Mediator complex, a coactivator involved in the regulated transcription of nearly all RNA polymerase II-dependent genes. Mediator functions as a bridge to convey information from gene-specific regulatory proteins to the basal RNA polymerase II transcription machinery. Mediator is recruited to promoters by direct interactions with regulatory proteins and serves as a scaffold for the assembly of a functional preinitiation complex with RNA polymerase II and the general transcription factors. This Dictyostelium discoideum (Social amoeba) protein is Putative mediator of RNA polymerase II transcription subunit 24 (med24).